A 136-amino-acid chain; its full sequence is Protein LITTLE ZIPPER 1 (136 aa).

Residues 97–122 (ENQNIIRENEKLKKKALLLHQENKTL) adopt a coiled-coil conformation.

As to quaternary structure, interacts with REV. As to expression, expressed in the adaxial epidermis of the cotyledons and in the vascular cylinder of wild-type torpedo stage embryos.

Functionally, competitive inhibitor of the HD-ZIPIII transcription factors in shoot apical meristem (SAM) development. Acts by forming non-functional heterodimers. Part of a negative feedback loop. Essential for proper functioning of stem cells in the SAM. The protein is Protein LITTLE ZIPPER 1 of Arabidopsis thaliana (Mouse-ear cress).